The following is a 92-amino-acid chain: Small ribosomal subunit protein uS19 (92 aa).

Belongs to the universal ribosomal protein uS19 family.

In terms of biological role, protein S19 forms a complex with S13 that binds strongly to the 16S ribosomal RNA. The polypeptide is Small ribosomal subunit protein uS19 (Acaryochloris marina (strain MBIC 11017)).